A 2440-amino-acid polypeptide reads, in one-letter code: Nuclear receptor corepressor 1 (2440 aa).

The span at 1-18 (MSSSGYPPNQGAFSTEQS) shows a compositional bias: polar residues. Disordered stretches follow at residues 1–177 (MSSS…SKLS) and 206–231 (QQQL…VEQK). Positions 1–373 (MSSSGYPPNQ…QRGAGLSATI (373 aa)) are interaction with ZBTB33 and HEXIM1. The segment covering 51-64 (SQASQLLQQQQQQQ) has biased composition (low complexity). 3 stretches are compositionally biased toward basic and acidic residues: residues 77–88 (PGSDRPQERRTS), 99–119 (VDHD…DSHF), and 141–155 (ADAK…KHEA). At Ser-172 the chain carries Phosphoserine. The stretch at 174–216 (SKLSKEELIQSMDRVDREIAKVEQQILKLKKKQQQLEEEAAKP) forms a coiled coil. Over residues 212-221 (EAAKPPEPEK) the composition is skewed to basic and acidic residues. Position 224 is a phosphoserine (Ser-224). The segment at 254-312 (FEGLGPKVELPLYNQPSDTKVYHENIKTNQVMRKKLILFFKRRNHARKQREQKICQRYD) is interaction with SIN3A/B. Residues 299–328 (ARKQREQKICQRYDQLMEAWEKKVDRIENN) are a coiled coil. An SANT 1 domain is found at 435–486 (QFMNVWTDHEKEIFKDKFIQHPKNFGLIASYLERKSVPDCVLYYYLTKKNEN). Disordered stretches follow at residues 497–632 (KRRG…TEEE) and 677–915 (NLLQ…GSIL). The stretch at 501-557 (RNQQIARPSQEEKVEEKEEDKAEKTEKKEEEKKDEEEKDEKEDSKENTKEKDKIDGT) forms a coiled coil. 2 stretches are compositionally biased toward basic and acidic residues: residues 509 to 531 (SQEE…KEEE) and 541 to 556 (KEDS…KIDG). Residues 592–605 (EAAAASAAAAAATE) are compositionally biased toward low complexity. Residues 606–617 (EPPPPLPPPPEP) show a composition bias toward pro residues. The 52-residue stretch at 623 to 674 (VETSRWTEEEMEVAKKGLVEHGRNWAAIAKMVGTKSEAQCKNFYFNYKRRHN) folds into the SANT 2 domain. The span at 698 to 708 (QCESVASTVSA) shows a compositional bias: polar residues. Acidic residues predominate over residues 709-728 (QEDEDIEASNEEENPEDSEV). The span at 752 to 768 (ELEPTTETAPSTSPSLA) shows a compositional bias: low complexity. Over residues 781 to 792 (ETQVNDSISAET) the composition is skewed to polar residues. A compositionally biased stretch (basic and acidic residues) spans 820–859 (DSVDVEVRVPENHASKVEGDNTKERDLDRASEKVEPRDED). 2 stretches are compositionally biased toward polar residues: residues 864-883 (QQIN…SATC) and 906-915 (SLLNPTGSIL). The tract at residues 988–1816 (RSSTSPCGTS…QGLPASRYNT (829 aa)) is interaction with ETO. Ser-999 carries the phosphoserine modification. The tract at residues 1022–1046 (VRLPTTRPTRPPPPLIPSSKTTVAS) is disordered. A Glycyl lysine isopeptide (Lys-Gly) (interchain with G-Cter in SUMO1); alternate cross-link involves residue Lys-1106. A Glycyl lysine isopeptide (Lys-Gly) (interchain with G-Cter in SUMO2); alternate cross-link involves residue Lys-1106. The residue at position 1111 (Ser-1111) is a Phosphoserine. Residue Lys-1184 forms a Glycyl lysine isopeptide (Lys-Gly) (interchain with G-Cter in SUMO2) linkage. Residues 1184–1204 (KGSISRMPIEDSSPEKGREEA) are disordered. Residues Ser-1195, Ser-1196, Ser-1249, Ser-1263, Ser-1281, and Ser-1322 each carry the phosphoserine modification. Lys-1336 is modified (N6-acetyllysine). A Phosphothreonine modification is found at Thr-1367. Lys-1389 is covalently cross-linked (Glycyl lysine isopeptide (Lys-Gly) (interchain with G-Cter in SUMO2)). Residue Lys-1412 forms a Glycyl lysine isopeptide (Lys-Gly) (interchain with G-Cter in SUMO2); alternate linkage. Lys-1412 is subject to N6-acetyllysine; alternate. Positions 1440–1459 (AGETVRSRHTSVVSSGPSVL) are disordered. Residues Ser-1450 and Ser-1472 each carry the phosphoserine modification. Polar residues predominate over residues 1488–1512 (YQNTMSRGSPMMNRTSDVTISSNKS). Residues 1488 to 1554 (YQNTMSRGSP…SPFDPHHRGS (67 aa)) are disordered. The segment at 1501 to 2440 (RTSDVTISSN…QYETLSDSDD (940 aa)) is interaction with C1D. Lys-1518 participates in a covalent cross-link: Glycyl lysine isopeptide (Lys-Gly) (interchain with G-Cter in SUMO2). Phosphoserine is present on Ser-1592. Disordered stretches follow at residues 1690-1759 (PRPY…SPSP) and 1884-1922 (SSAF…LRTR). Composition is skewed to basic and acidic residues over residues 1712–1729 (AERE…RERI) and 1903–1921 (AGKD…ELRT). Residues 1933-1937 (IDVII) carry the CORNR box 1 motif. A disordered region spans residues 1943 to 1969 (SDKDARERGSQSSDSSSSLSSHRYETP). Residues 1952-1963 (SQSSDSSSSLSS) show a composition bias toward low complexity. Ser-1977 and Ser-1981 each carry phosphoserine. The interval 2006 to 2041 (PTRQYEGPLHHYRPQQESPSPQQQLPPSSQAEGMGQ) is disordered. A compositionally biased stretch (low complexity) spans 2020 to 2035 (QQESPSPQQQLPPSSQ). The ID1 stretch occupies residues 2032–2115 (PSSQAEGMGQ…QAQSVHHQRP (84 aa)). Residues 2047–2050 (RLIT) are required for interaction with RARA in the absence of its ligand. The CORNR box 2 motif lies at 2055-2059 (ICQII). A compositionally biased stretch (low complexity) spans 2067 to 2086 (QVSSQTPQQPPTSTFQNSPS). The segment at 2067-2155 (QVSSQTPQQP…PYEPISPPQV (89 aa)) is disordered. The segment covering 2087 to 2110 (ALVSTPVRTKTSNRYSPESQAQSV) has biased composition (polar residues). Residues Ser-2102, Ser-2120, Ser-2136, Ser-2151, and Ser-2184 each carry the phosphoserine modification. Residues 2124–2142 (LVDKSRGSRPGKSPERSHV) show a composition bias toward basic and acidic residues. The interval 2212–2273 (IFRKLNSSGG…EDIIRKALMG (62 aa)) is ID2. Positions 2263-2267 (LEDII) match the CORNR box 3 motif. Residues 2287-2440 (SQPMGVVPGT…QYETLSDSDD (154 aa)) form a disordered region. Positions 2296 to 2305 (TANTSVVTSG) are enriched in polar residues. Residue Thr-2399 is modified to Phosphothreonine. Polar residues-rich tracts occupy residues 2407 to 2418 (AVNQAAPHQQNR) and 2431 to 2440 (QYETLSDSDD). 2 positions are modified to phosphoserine: Ser-2436 and Ser-2438.

It belongs to the N-CoR nuclear receptor corepressors family. As to quaternary structure, forms a large corepressor complex that contains SIN3A/B and histone deacetylases HDAC1 and HDAC2. This complex associates with the thyroid receptor (TR) and the retinoid acid receptor (RAR) in the absence of ligand. Interacts directly with RARA; the interaction is facilitated with RARA trimethylation. Component of the N-Cor repressor complex, at least composed of CBFA2T3, HEXIM1, NCOR1, NCOR2, HDAC3, TBL1X, TBL1XR1, CORO2A and GPS2. Interacts with ZBTB33; the interaction serves to recruit the N-CoR complex to promoter regions containing methylated CpG dinucleotides. Interacts with TRIM28 and KDM3A. Interacts (via the RD1 domain) with BAZ1A (via its N-terminal); the interaction corepresses a number of NCOR1-regulated genes. Interacts with BCL6, C1D, DACH1, HEXIM1, HDAC7, RORA, RORC, SAP30, SIAH2, SIN3A and SIN3B. May interact with DEAF1. Interacts with RXRA. Interacts with SETD5. Interacts with VDR. Interacts with ZBTB7A. Interacts with AR. Interacts with HDAC3. Ubiquitinated; mediated by SIAH2 and leading to its subsequent proteasomal degradation.

It is found in the nucleus. Mediates transcriptional repression by certain nuclear receptors. Part of a complex which promotes histone deacetylation and the formation of repressive chromatin structures which may impede the access of basal transcription factors. Participates in the transcriptional repressor activity produced by BCL6. Recruited by ZBTB7A to the androgen response elements/ARE on target genes, negatively regulates androgen receptor signaling and androgen-induced cell proliferation. Mediates the NR1D1-dependent repression and circadian regulation of TSHB expression. The NCOR1-HDAC3 complex regulates the circadian expression of the core clock gene ARTNL/BMAL1 and the genes involved in lipid metabolism in the liver. The protein is Nuclear receptor corepressor 1 (NCOR1) of Homo sapiens (Human).